The chain runs to 346 residues: N-acetyl-gamma-glutamyl-phosphate reductase (346 aa).

Residue Cys-149 is part of the active site.

This sequence belongs to the NAGSA dehydrogenase family. Type 1 subfamily.

Its subcellular location is the cytoplasm. It carries out the reaction N-acetyl-L-glutamate 5-semialdehyde + phosphate + NADP(+) = N-acetyl-L-glutamyl 5-phosphate + NADPH + H(+). It functions in the pathway amino-acid biosynthesis; L-arginine biosynthesis; N(2)-acetyl-L-ornithine from L-glutamate: step 3/4. Catalyzes the NADPH-dependent reduction of N-acetyl-5-glutamyl phosphate to yield N-acetyl-L-glutamate 5-semialdehyde. The chain is N-acetyl-gamma-glutamyl-phosphate reductase from Desulfotalea psychrophila (strain LSv54 / DSM 12343).